We begin with the raw amino-acid sequence, 617 residues long: 1-deoxy-D-xylulose-5-phosphate synthase (617 aa).

Thiamine diphosphate is bound by residues His-80 and 121-123; that span reads GHS. Asp-152 serves as a coordination point for Mg(2+). Thiamine diphosphate-binding positions include 153–154, Asn-181, Tyr-277, and Glu-360; that span reads GA. Mg(2+) is bound at residue Asn-181.

It belongs to the transketolase family. DXPS subfamily. In terms of assembly, homodimer. It depends on Mg(2+) as a cofactor. Thiamine diphosphate is required as a cofactor.

The enzyme catalyses D-glyceraldehyde 3-phosphate + pyruvate + H(+) = 1-deoxy-D-xylulose 5-phosphate + CO2. Its pathway is metabolic intermediate biosynthesis; 1-deoxy-D-xylulose 5-phosphate biosynthesis; 1-deoxy-D-xylulose 5-phosphate from D-glyceraldehyde 3-phosphate and pyruvate: step 1/1. In terms of biological role, catalyzes the acyloin condensation reaction between C atoms 2 and 3 of pyruvate and glyceraldehyde 3-phosphate to yield 1-deoxy-D-xylulose-5-phosphate (DXP). In Blochmanniella floridana, this protein is 1-deoxy-D-xylulose-5-phosphate synthase.